The following is a 255-amino-acid chain: 5-oxoprolinase subunit A (255 aa).

The protein belongs to the LamB/PxpA family. In terms of assembly, forms a complex composed of PxpA, PxpB and PxpC.

The enzyme catalyses 5-oxo-L-proline + ATP + 2 H2O = L-glutamate + ADP + phosphate + H(+). Catalyzes the cleavage of 5-oxoproline to form L-glutamate coupled to the hydrolysis of ATP to ADP and inorganic phosphate. The polypeptide is 5-oxoprolinase subunit A (Clostridium kluyveri (strain ATCC 8527 / DSM 555 / NBRC 12016 / NCIMB 10680 / K1)).